A 104-amino-acid polypeptide reads, in one-letter code: Protein RnfH (104 aa).

The protein belongs to the UPF0125 (RnfH) family.

The chain is Protein RnfH from Pseudomonas fluorescens (strain ATCC BAA-477 / NRRL B-23932 / Pf-5).